We begin with the raw amino-acid sequence, 131 residues long: Profilin (131 aa).

Belongs to the profilin family. As to quaternary structure, occurs in many kinds of cells as a complex with monomeric actin in a 1:1 ratio.

The protein resides in the cytoplasm. It localises to the cytoskeleton. Functionally, binds to actin and affects the structure of the cytoskeleton. At high concentrations, profilin prevents the polymerization of actin, whereas it enhances it at low concentrations. By binding to PIP2, it inhibits the formation of IP3 and DG. The chain is Profilin from Arachis hypogaea (Peanut).